A 321-amino-acid chain; its full sequence is Lipoyl synthase (321 aa).

The disordered stretch occupies residues 1–21 (MRHRWEDRPVAPPPDGRPTEY). [4Fe-4S] cluster contacts are provided by Cys-63, Cys-68, Cys-74, Cys-89, Cys-93, Cys-96, and Ser-302. The 217-residue stretch at 75–291 (WNNRTATFMI…KKLGLEMGFS (217 aa)) folds into the Radical SAM core domain. Residues 301-321 (SSYHAHEQTEDARRGALGARG) form a disordered region. Positions 304–314 (HAHEQTEDARR) are enriched in basic and acidic residues.

The protein belongs to the radical SAM superfamily. Lipoyl synthase family. [4Fe-4S] cluster is required as a cofactor.

The protein localises to the cytoplasm. It carries out the reaction [[Fe-S] cluster scaffold protein carrying a second [4Fe-4S](2+) cluster] + N(6)-octanoyl-L-lysyl-[protein] + 2 oxidized [2Fe-2S]-[ferredoxin] + 2 S-adenosyl-L-methionine + 4 H(+) = [[Fe-S] cluster scaffold protein] + N(6)-[(R)-dihydrolipoyl]-L-lysyl-[protein] + 4 Fe(3+) + 2 hydrogen sulfide + 2 5'-deoxyadenosine + 2 L-methionine + 2 reduced [2Fe-2S]-[ferredoxin]. It participates in protein modification; protein lipoylation via endogenous pathway; protein N(6)-(lipoyl)lysine from octanoyl-[acyl-carrier-protein]: step 2/2. In terms of biological role, catalyzes the radical-mediated insertion of two sulfur atoms into the C-6 and C-8 positions of the octanoyl moiety bound to the lipoyl domains of lipoate-dependent enzymes, thereby converting the octanoylated domains into lipoylated derivatives. The polypeptide is Lipoyl synthase (Rubrobacter xylanophilus (strain DSM 9941 / JCM 11954 / NBRC 16129 / PRD-1)).